Here is a 201-residue protein sequence, read N- to C-terminus: MGDRICGPEIERLIQLLARLPGLGPRSARRAALHLIRKREELFGPLAEAMRVARDTIVSCSVCGNVDSCDPCTICRDERRDPSTLIVVETVGDLWALERSGAVKGRYHVLGGVLSPLDGVGPKDLNISSLIERVAAGGISEVVLAVNATVDGQTTAHYVTDLISHLNVRTTRLAHGVPVGGELDYLDEGTLAAALRARTDF.

The segment at 60–75 (CSVCGNVDSCDPCTIC) adopts a C4-type zinc-finger fold. The Toprim domain occupies 83–178 (STLIVVETVG…RTTRLAHGVP (96 aa)).

Belongs to the RecR family.

Functionally, may play a role in DNA repair. It seems to be involved in an RecBC-independent recombinational process of DNA repair. It may act with RecF and RecO. This is Recombination protein RecR from Methylocella silvestris (strain DSM 15510 / CIP 108128 / LMG 27833 / NCIMB 13906 / BL2).